A 704-amino-acid polypeptide reads, in one-letter code: PHD finger protein MALE MEIOCYTE DEATH 1 (704 aa).

Residues 606-656 (MVKCICRARDDDGERMISCDVCEVWQHTRCCGIDDSDTLPPLFVCSNCCEE) form a PHD-type zinc finger. Zn(2+)-binding residues include Cys-609, Cys-611, Cys-624, Cys-627, His-632, Cys-635, Cys-650, and Cys-653.

Interacts with JMJ16 in the nucleus of male meiocytes, especially on pachytene chromosomes. Expressed in inflorescence, specifically in male meiocytes.

The protein localises to the nucleus. In terms of biological role, probable transcription factor required for chromosome organization and progression during male meiosis (e.g. microsporogenesis). Necessary for fertility and meiotic progressive compaction of prophase I chromosomes to metaphase I bivalents. Together with JMJ16, promotes gene expression in male meiocytes in an H3K9me3-dependent manner, and contributes to meiotic chromosome condensation by triggering some condensin promoters (e.g. CAP-D3 and CAP-H). The polypeptide is PHD finger protein MALE MEIOCYTE DEATH 1 (Arabidopsis thaliana (Mouse-ear cress)).